The following is a 466-amino-acid chain: Probable Xaa-Pro aminopeptidase pepP (466 aa).

Mn(2+)-binding residues include D264, D275, E398, and E438.

The protein belongs to the peptidase M24B family. Mn(2+) serves as cofactor.

The enzyme catalyses Release of any N-terminal amino acid, including proline, that is linked to proline, even from a dipeptide or tripeptide.. Functionally, catalyzes the removal of a penultimate prolyl residue from the N-termini of peptides. In Aspergillus clavatus (strain ATCC 1007 / CBS 513.65 / DSM 816 / NCTC 3887 / NRRL 1 / QM 1276 / 107), this protein is Probable Xaa-Pro aminopeptidase pepP (pepP).